Here is a 97-residue protein sequence, read N- to C-terminus: Cell division protein FtsL (97 aa).

Over 1-11 the chain is Cytoplasmic; it reads MSRLFVKRLPT. The chain crosses the membrane as a helical span at residues 12 to 32; sequence GSFLMLLLYIGLLLSAIAVAY. The Periplasmic segment spans residues 33 to 97; that stretch reads STYWNRQLLN…DPAEVRMVAP (65 aa).

Belongs to the FtsL family. In terms of assembly, part of a complex composed of FtsB, FtsL and FtsQ.

Its subcellular location is the cell inner membrane. In terms of biological role, essential cell division protein. May link together the upstream cell division proteins, which are predominantly cytoplasmic, with the downstream cell division proteins, which are predominantly periplasmic. The chain is Cell division protein FtsL from Pseudomonas aeruginosa (strain ATCC 15692 / DSM 22644 / CIP 104116 / JCM 14847 / LMG 12228 / 1C / PRS 101 / PAO1).